Reading from the N-terminus, the 258-residue chain is Imidazole glycerol phosphate synthase subunit HisF (258 aa).

Active-site residues include Asp-11 and Asp-130.

Belongs to the HisA/HisF family. In terms of assembly, heterodimer of HisH and HisF.

The protein resides in the cytoplasm. It carries out the reaction 5-[(5-phospho-1-deoxy-D-ribulos-1-ylimino)methylamino]-1-(5-phospho-beta-D-ribosyl)imidazole-4-carboxamide + L-glutamine = D-erythro-1-(imidazol-4-yl)glycerol 3-phosphate + 5-amino-1-(5-phospho-beta-D-ribosyl)imidazole-4-carboxamide + L-glutamate + H(+). The protein operates within amino-acid biosynthesis; L-histidine biosynthesis; L-histidine from 5-phospho-alpha-D-ribose 1-diphosphate: step 5/9. Its function is as follows. IGPS catalyzes the conversion of PRFAR and glutamine to IGP, AICAR and glutamate. The HisF subunit catalyzes the cyclization activity that produces IGP and AICAR from PRFAR using the ammonia provided by the HisH subunit. This is Imidazole glycerol phosphate synthase subunit HisF from Methylobacterium nodulans (strain LMG 21967 / CNCM I-2342 / ORS 2060).